We begin with the raw amino-acid sequence, 531 residues long: RNA-binding protein RO60 (531 aa).

The TROVE domain maps to 24–360 (VRNNAGGFVY…AFGNVQPANT (337 aa)). The tract at residues 128 to 274 (RTGTMLLHFL…TNGLTWLLRN (147 aa)) is RNA-binding. Residues 352-531 (FGNVQPANTR…VMTAFARGEV (180 aa)) are VWFA-like domain. A divalent metal cation contacts are provided by S369, S371, and T438.

It belongs to the Ro 60 kDa family. Forms oligomers upon binding DrY RNA, The multimers are of an average size of 700 kDa and are composed of around 12 molecules of Rsr-DrY RNA.

It localises to the cytoplasm. In terms of biological role, binds to several small RNAs that accumulate during recovery from UV irradiation. Contributes to the resistance of D.radiodurans to ultraviolet irradiation. In Deinococcus radiodurans (strain ATCC 13939 / DSM 20539 / JCM 16871 / CCUG 27074 / LMG 4051 / NBRC 15346 / NCIMB 9279 / VKM B-1422 / R1), this protein is RNA-binding protein RO60.